Here is a 335-residue protein sequence, read N- to C-terminus: Teichoic acids export ATP-binding protein TagH (335 aa).

Positions 26 to 246 constitute an ABC transporter domain; that stretch reads IKGLFMPKSQ…YDEFVKWFNK (221 aa). 60–67 is a binding site for ATP; sequence GINGSGKS.

Belongs to the ABC transporter superfamily. Teichoic acids exporter (TC 3.A.1.104.1) family. The complex is composed of two ATP-binding proteins (TagH) and two transmembrane proteins (TagG).

The protein localises to the cell membrane. The enzyme catalyses ATP + H2O + teichoic acidSide 1 = ADP + phosphate + teichoic acidSide 2.. Its function is as follows. Part of the ABC transporter complex TagGH involved in teichoic acids export. Responsible for energy coupling to the transport system. This is Teichoic acids export ATP-binding protein TagH from Listeria innocua serovar 6a (strain ATCC BAA-680 / CLIP 11262).